A 144-amino-acid chain; its full sequence is Maximins 3/H5 (144 aa).

Positions 1-18 (MNFKYIFAVSFLIASAYA) are cleaved as a signal peptide. 2 propeptides span residues 19–43 (RSVQ…REIR) and 74–123 (TAEE…KEKR). Leucine amide is present on leucine 143.

It belongs to the bombinin family. As to expression, expressed by the skin glands.

Its subcellular location is the secreted. Its function is as follows. Maximin-3 shows antibacterial activity against both Gram-positive and Gram-negative bacteria. It also shows antimicrobial activity against the fungus C.albicans, but not against A.flavus nor P.uticale. It has little hemolytic activity. It possess a significant cytotoxicity against tumor cell lines. It possess a significant anti-HIV activity. It shows high spermicidal activity. Functionally, maximin-H5 shows antibacterial activity only against the Gram-positive bacteria S.aureus. The other bacterial and fungal strains tested were resistant to it. The presence of metal ions, like Zn(2+) and Mg(2+), did not increase its antimicrobial potency. Does not show hemolytic activity (in a concentration up to 80 uM). The polypeptide is Maximins 3/H5 (Bombina maxima (Giant fire-bellied toad)).